A 364-amino-acid chain; its full sequence is Phospho-N-acetylmuramoyl-pentapeptide-transferase (364 aa).

The next 10 helical transmembrane spans lie at 3–23, 51–71, 80–100, 116–136, 154–174, 185–205, 229–249, 256–276, 281–301, and 341–361; these read AILF…RVAI, TMGG…AKLI, ALLL…DDFI, MIGL…SWLE, IGWI…IIAA, LDGL…FVNI, PLDL…FLWW, IFMG…LAIL, LLLI…MLQV, and FWII…AEWV.

Belongs to the glycosyltransferase 4 family. MraY subfamily. Mg(2+) serves as cofactor.

The protein localises to the cell membrane. It carries out the reaction UDP-N-acetyl-alpha-D-muramoyl-L-alanyl-gamma-D-glutamyl-meso-2,6-diaminopimeloyl-D-alanyl-D-alanine + di-trans,octa-cis-undecaprenyl phosphate = di-trans,octa-cis-undecaprenyl diphospho-N-acetyl-alpha-D-muramoyl-L-alanyl-D-glutamyl-meso-2,6-diaminopimeloyl-D-alanyl-D-alanine + UMP. Its pathway is cell wall biogenesis; peptidoglycan biosynthesis. Functionally, catalyzes the initial step of the lipid cycle reactions in the biosynthesis of the cell wall peptidoglycan: transfers peptidoglycan precursor phospho-MurNAc-pentapeptide from UDP-MurNAc-pentapeptide onto the lipid carrier undecaprenyl phosphate, yielding undecaprenyl-pyrophosphoryl-MurNAc-pentapeptide, known as lipid I. In Nocardioides sp. (strain ATCC BAA-499 / JS614), this protein is Phospho-N-acetylmuramoyl-pentapeptide-transferase.